The sequence spans 212 residues: FMN-dependent NADH:quinone oxidoreductase 1 (212 aa).

Residues serine 10, 16–18 (SHS), 97–100 (MYNF), and 145–148 (SRGG) contribute to the FMN site.

The protein belongs to the azoreductase type 1 family. In terms of assembly, homodimer. The cofactor is FMN.

The catalysed reaction is 2 a quinone + NADH + H(+) = 2 a 1,4-benzosemiquinone + NAD(+). It catalyses the reaction N,N-dimethyl-1,4-phenylenediamine + anthranilate + 2 NAD(+) = 2-(4-dimethylaminophenyl)diazenylbenzoate + 2 NADH + 2 H(+). Its function is as follows. Quinone reductase that provides resistance to thiol-specific stress caused by electrophilic quinones. In terms of biological role, also exhibits azoreductase activity. Catalyzes the reductive cleavage of the azo bond in aromatic azo compounds to the corresponding amines. This chain is FMN-dependent NADH:quinone oxidoreductase 1, found in Pseudomonas fluorescens (strain Pf0-1).